The primary structure comprises 311 residues: 4-diphosphocytidyl-2-C-methyl-D-erythritol kinase (311 aa).

The active site involves Lys-16. An ATP-binding site is contributed by 100–110; that stretch reads PIGAGLAGGSS. Asp-142 is an active-site residue.

This sequence belongs to the GHMP kinase family. IspE subfamily.

It catalyses the reaction 4-CDP-2-C-methyl-D-erythritol + ATP = 4-CDP-2-C-methyl-D-erythritol 2-phosphate + ADP + H(+). It participates in isoprenoid biosynthesis; isopentenyl diphosphate biosynthesis via DXP pathway; isopentenyl diphosphate from 1-deoxy-D-xylulose 5-phosphate: step 3/6. In terms of biological role, catalyzes the phosphorylation of the position 2 hydroxy group of 4-diphosphocytidyl-2C-methyl-D-erythritol. The sequence is that of 4-diphosphocytidyl-2-C-methyl-D-erythritol kinase from Prochlorococcus marinus (strain MIT 9301).